Reading from the N-terminus, the 122-residue chain is WUSCHEL-related homeobox 7 (122 aa).

Residues Ala-25 to Cys-89 constitute a DNA-binding region (homeobox; WUS-type). The segment covering Asp-98–Asp-111 has biased composition (basic and acidic residues). Positions Asp-98 to Gly-122 are disordered. The span at Asn-112 to Gly-122 shows a compositional bias: basic residues.

The protein belongs to the WUS homeobox family.

It is found in the nucleus. Potential transcription factor that plays a central role during developmental processes. In Arabidopsis thaliana (Mouse-ear cress), this protein is WUSCHEL-related homeobox 7 (WOX7).